The chain runs to 206 residues: Probable chemoreceptor glutamine deamidase CheD (206 aa).

It belongs to the CheD family.

The catalysed reaction is L-glutaminyl-[protein] + H2O = L-glutamyl-[protein] + NH4(+). Functionally, probably deamidates glutamine residues to glutamate on methyl-accepting chemotaxis receptors (MCPs), playing an important role in chemotaxis. This is Probable chemoreceptor glutamine deamidase CheD from Laribacter hongkongensis (strain HLHK9).